The following is a 251-amino-acid chain: MTLNKQQLTLNCDMGESFGSWKMGADDSVMPHVDMANIACGFHASDPNVMHDTITLANLHDVDIGAHPGYPDLQGFGRRSLSMSSDEITNMVIYQVGALQALCRAQYTDIGYIKPHGALYNDMMKSDAVFRAVVKAAALFKVPLMILASQENEKYLEIADDYDVPLLFEAFADRLYQDDGMLTPRRHPNAVLKDELAILEQVRTLADSGRVKTASGSYILLEADTICVHGDNEESIALIQKIRQSLYSGGN.

Belongs to the LamB/PxpA family. In terms of assembly, forms a complex composed of PxpA, PxpB and PxpC.

The catalysed reaction is 5-oxo-L-proline + ATP + 2 H2O = L-glutamate + ADP + phosphate + H(+). Catalyzes the cleavage of 5-oxoproline to form L-glutamate coupled to the hydrolysis of ATP to ADP and inorganic phosphate. This Vibrio parahaemolyticus serotype O3:K6 (strain RIMD 2210633) protein is 5-oxoprolinase subunit A.